Reading from the N-terminus, the 251-residue chain is Triosephosphate isomerase (251 aa).

Residue 9–11 (NWK) participates in substrate binding. The Electrophile role is filled by His95. Catalysis depends on Glu167, which acts as the Proton acceptor. Substrate contacts are provided by residues Gly173, Ser212, and 233 to 234 (GG).

Belongs to the triosephosphate isomerase family. In terms of assembly, homodimer.

Its subcellular location is the cytoplasm. It catalyses the reaction D-glyceraldehyde 3-phosphate = dihydroxyacetone phosphate. The protein operates within carbohydrate biosynthesis; gluconeogenesis. It functions in the pathway carbohydrate degradation; glycolysis; D-glyceraldehyde 3-phosphate from glycerone phosphate: step 1/1. Involved in the gluconeogenesis. Catalyzes stereospecifically the conversion of dihydroxyacetone phosphate (DHAP) to D-glyceraldehyde-3-phosphate (G3P). This is Triosephosphate isomerase from Pseudomonas fluorescens (strain ATCC BAA-477 / NRRL B-23932 / Pf-5).